Consider the following 134-residue polypeptide: Large ribosomal subunit protein bL20 (134 aa).

It belongs to the bacterial ribosomal protein bL20 family.

Its function is as follows. Binds directly to 23S ribosomal RNA and is necessary for the in vitro assembly process of the 50S ribosomal subunit. It is not involved in the protein synthesizing functions of that subunit. In Sinorhizobium medicae (strain WSM419) (Ensifer medicae), this protein is Large ribosomal subunit protein bL20.